A 139-amino-acid chain; its full sequence is Stress-related protein 1 (139 aa).

The segment covering 1 to 12 has biased composition (polar residues); it reads MTSESSTPTGST. A disordered region spans residues 1-86; sequence MTSESSTPTG…AERPGSATTP (86 aa). Low complexity-rich tracts occupy residues 14-53 and 60-74; these read ALPA…SLVV and SPVV…TRPR. Ser-60 bears the Phosphoserine mark.

As to expression, embryo.

Functionally, involved in drought, heat, cold, and/or salt tolerance. This is Stress-related protein 1 (SRP1) from Zea mays (Maize).